The following is a 214-amino-acid chain: Probable GTP-binding protein EngB (214 aa).

In terms of domain architecture, EngB-type G spans 40 to 212 (SLPEIVFVGK…KASFAQCIKH (173 aa)). GTP contacts are provided by residues 48-55 (GKSNVGKS), 75-79 (GRTRQ), 93-96 (DLPG), 160-163 (TKSD), and 191-193 (VSS). 2 residues coordinate Mg(2+): Ser-55 and Thr-77.

The protein belongs to the TRAFAC class TrmE-Era-EngA-EngB-Septin-like GTPase superfamily. EngB GTPase family. Requires Mg(2+) as cofactor.

Necessary for normal cell division and for the maintenance of normal septation. This chain is Probable GTP-binding protein EngB, found in Rickettsia prowazekii (strain Madrid E).